A 239-amino-acid chain; its full sequence is Ditrans,polycis-undecaprenyl-diphosphate synthase ((2E,6E)-farnesyl-diphosphate specific) (239 aa).

D18 is an active-site residue. Residue D18 participates in Mg(2+) binding. Substrate contacts are provided by residues 19–22 (GNGR), W23, R31, H35, and 63–65 (SSE). Catalysis depends on N66, which acts as the Proton acceptor. Substrate is bound by residues W67, R69, R186, and 192 to 194 (RIS). Residue E205 participates in Mg(2+) binding.

Belongs to the UPP synthase family. Homodimer. Requires Mg(2+) as cofactor.

The catalysed reaction is 8 isopentenyl diphosphate + (2E,6E)-farnesyl diphosphate = di-trans,octa-cis-undecaprenyl diphosphate + 8 diphosphate. Its function is as follows. Catalyzes the sequential condensation of isopentenyl diphosphate (IPP) with (2E,6E)-farnesyl diphosphate (E,E-FPP) to yield (2Z,6Z,10Z,14Z,18Z,22Z,26Z,30Z,34E,38E)-undecaprenyl diphosphate (di-trans,octa-cis-UPP). UPP is the precursor of glycosyl carrier lipid in the biosynthesis of bacterial cell wall polysaccharide components such as peptidoglycan and lipopolysaccharide. This chain is Ditrans,polycis-undecaprenyl-diphosphate synthase ((2E,6E)-farnesyl-diphosphate specific), found in Haemophilus influenzae (strain ATCC 51907 / DSM 11121 / KW20 / Rd).